Reading from the N-terminus, the 653-residue chain is Potassium voltage-gated channel subfamily A member 4 (653 aa).

The Cytoplasmic segment spans residues 1-304 (MEVAMVSAES…LLFEYPESSS (304 aa)). The segment at 24–148 (QARARERERL…RFYYSEDDHG (125 aa)) is disordered. The span at 36–52 (SRAAAAAAVAAATAAVE) shows a compositional bias: low complexity. Residues 81–97 (GSRRRRRQRSEKKKAHY) are compositionally biased toward basic residues. Position 90 is a phosphoserine; by PKA (Ser90). Phosphoserine is present on Ser122. Positions 122–137 (SEEEEDEEEEEEEEEE) are enriched in acidic residues. The chain crosses the membrane as a helical span at residues 305–326 (PARGIAIVSVLVILISIVIFCL). At 327–370 (ETLPEFRDDRDLVMALSAGGHGGLLNDTSAPHLENSGHTIFNDP) the chain is on the extracellular side. A glycan (N-linked (GlcNAc...) asparagine) is linked at Asn352. Residues 371-392 (FFIVETVCIVWFSFEFVVRCFA) form a helical membrane-spanning segment. Residues 393–403 (CPSQALFFKNI) lie on the Cytoplasmic side of the membrane. The chain crosses the membrane as a helical span at residues 404 to 424 (MNIIDIVSILPYFITLGTDLA). Over 425-439 (QQQGGGNGQQQQAMS) the chain is Extracellular. The helical; Voltage-sensor transmembrane segment at 440–460 (FAILRIIRLVRVFRIFKLSRH) threads the bilayer. The Cytoplasmic segment spans residues 461 to 475 (SKGLQILGHTLRASM). The S4-S5 linker stretch occupies residues 462–475 (KGLQILGHTLRASM). The chain crosses the membrane as a helical span at residues 476–497 (RELGLLIFFLFIGVILFSSAVY). At 498–511 (FAEADEPTTHFQSI) the chain is on the extracellular side. Residues 512-523 (PDAFWWAVVTMT) constitute an intramembrane region (helical). The Selectivity filter motif lies at 524 to 529 (TVGYGD). An intramembrane segment occupies 524 to 531 (TVGYGDMK). Topologically, residues 532–538 (PITVGGK) are extracellular. A helical membrane pass occupies residues 539–567 (IVGSLCAIAGVLTIALPVPVIVSNFNYFY). Topologically, residues 568–653 (HRETENEEQT…SNAKAVETDV (86 aa)) are cytoplasmic. Ser599 bears the Phosphoserine; by PKA mark. The segment covering 629 to 640 (CQGKGDDSETDK) has biased composition (basic and acidic residues). A disordered region spans residues 629 to 653 (CQGKGDDSETDKNNCSNAKAVETDV). Residues 651-653 (TDV) carry the PDZ-binding motif.

It belongs to the potassium channel family. A (Shaker) (TC 1.A.1.2) subfamily. Kv1.4/KCNA4 sub-subfamily. As to quaternary structure, homotetramer and heterotetramer of potassium channel proteins. Interacts with KCNAB1 and KCNAB2. Interacts with DLG1, DLG2 and DLG4 via their PDZ domains. Interacts with SIGMAR1. Detected in a complex with KCNA1. Interacts with KCNA2. Part of a complex containing KCNA1, KCNAB1 and LGI1. Interacts (via cytoplasmic N-terminal domain) with KCNRG. In terms of tissue distribution, expressed in brain, and at lower levels in the testis, lung, kidney, colon and heart. Detected in heart ventricle.

The protein localises to the cell membrane. It is found in the cell projection. Its subcellular location is the axon. The catalysed reaction is K(+)(in) = K(+)(out). Inhibited by 4-aminopyridine (4-AP), but not by tetraethylammonium (TEA) and charybdotoxin (CTX). Voltage-gated potassium channel that mediates transmembrane potassium transport in excitable membranes. Forms tetrameric potassium-selective channels through which potassium ions pass in accordance with their electrochemical gradient. The channel alternates between opened and closed conformations in response to the voltage difference across the membrane. Can form functional homotetrameric channels and heterotetrameric channels that contain variable proportions of KCNA1, KCNA2, KCNA4, KCNA5, and possibly other family members as well; channel properties depend on the type of alpha subunits that are part of the channel. Channel properties are modulated by cytoplasmic beta subunits that regulate the subcellular location of the alpha subunits and promote rapid inactivation. In vivo, membranes probably contain a mixture of heteromeric potassium channel complexes, making it difficult to assign currents observed in intact tissues to any particular potassium channel family member. Homotetrameric KCNA4 forms a potassium channel that opens in response to membrane depolarization, followed by rapid spontaneous channel closure. Likewise, a heterotetrameric channel formed by KCNA1 and KCNA4 shows rapid inactivation. The polypeptide is Potassium voltage-gated channel subfamily A member 4 (KCNA4) (Homo sapiens (Human)).